Consider the following 249-residue polypeptide: tRNA pseudouridine synthase A (249 aa).

The active-site Nucleophile is the Asp-53. Tyr-111 contacts substrate.

This sequence belongs to the tRNA pseudouridine synthase TruA family. In terms of assembly, homodimer.

It catalyses the reaction uridine(38/39/40) in tRNA = pseudouridine(38/39/40) in tRNA. Its function is as follows. Formation of pseudouridine at positions 38, 39 and 40 in the anticodon stem and loop of transfer RNAs. The sequence is that of tRNA pseudouridine synthase A from Streptococcus equi subsp. equi (strain 4047).